The chain runs to 277 residues: Uridine-cytidine kinase 1 (277 aa).

The segment at 1 to 30 (MASAGGEDCESPAPEADRPHQRPFLIGVSG) is disordered. 30-38 (GGTASGKST) serves as a coordination point for ATP. Residue Asp65 is part of the active site. Asp87, Tyr115, His120, Arg169, Arg178, and Gln186 together coordinate substrate. Position 215 (Asp215) interacts with ATP. The segment at 247–277 (SYKRTFSEPGDHPGMLTSGKRSHLESSSRPH) is disordered. Residue Thr251 is modified to Phosphothreonine. A Phosphoserine modification is found at Ser253. Residues 268 to 277 (SHLESSSRPH) show a composition bias toward basic and acidic residues.

Belongs to the uridine kinase family. Ubiquitous.

It catalyses the reaction uridine + ATP = UMP + ADP + H(+). The enzyme catalyses cytidine + ATP = CMP + ADP + H(+). The protein operates within pyrimidine metabolism; CTP biosynthesis via salvage pathway; CTP from cytidine: step 1/3. Its pathway is pyrimidine metabolism; UMP biosynthesis via salvage pathway; UMP from uridine: step 1/1. Its function is as follows. Phosphorylates uridine and cytidine to uridine monophosphate and cytidine monophosphate. Does not phosphorylate deoxyribonucleosides or purine ribonucleosides. Can use ATP or GTP as a phosphate donor. Can also phosphorylate cytidine and uridine nucleoside analogs such as 6-azauridine, 5-fluorouridine, 4-thiouridine, 5-bromouridine, N(4)-acetylcytidine, N(4)-benzoylcytidine, 5-fluorocytidine, 2-thiocytidine, 5-methylcytidine, and N(4)-anisoylcytidine. In Homo sapiens (Human), this protein is Uridine-cytidine kinase 1 (UCK1).